Consider the following 149-residue polypeptide: Oocyte-expressed protein homolog (149 aa).

The interval 1 to 23 (MVDDAGTAESQRGKQTPADSLEQ) is disordered. Residues 8-18 (AESQRGKQTPA) are compositionally biased toward polar residues. The region spanning 49–110 (PLVFYLEAWL…SVQNRVKSML (62 aa)) is the KH; atypical domain.

Belongs to the KHDC1 family. Component of the subcortical maternal complex (SCMC), at least composed of NLRP5, KHDC3, OOEP, and TLE6. Within the complex, interacts with NLRP5, KHDC3 and TLE6. As part of the SCMC interacts with the SCMC-associated protein NLRP4F. The SCMC may facilitate translocation of its components between the nuclear and cytoplasmic compartments. Forms a scaffold complex with KHDC3/FILIA, and interacts with BLM and TRIM25 at DNA replication forks.

The protein localises to the cytoplasm. It localises to the nucleus. Functionally, component of the subcortical maternal complex (SCMC), a multiprotein complex that plays a key role in early embryonic development. The SCMC complex is a structural constituent of cytoplasmic lattices, which consist in fibrous structures found in the cytoplasm of oocytes and preimplantation embryos. They are required to store maternal proteins critical for embryonic development, such as proteins that control epigenetic reprogramming of the preimplantation embryo, and prevent their degradation or activation. As part of the OOEP-KHDC3 scaffold, recruits BLM and TRIM25 to DNA replication forks, thereby promoting the ubiquitination of BLM by TRIM25, enhancing BLM retainment at replication forks and therefore promoting stalled replication fork restart. Positively regulates the homologous recombination-mediated DNA double-strand break (DSB) repair pathway by regulating ATM activation and RAD51 recruitment to DSBs in oocytes. Thereby contributes to oocyte survival and the resumption and completion of meiosis. The polypeptide is Oocyte-expressed protein homolog (OOEP) (Papio anubis (Olive baboon)).